Reading from the N-terminus, the 337-residue chain is 2-oxoglutarate receptor 1 (337 aa).

The Extracellular segment spans residues 1-34 (MNEPLDYLANASDFPDYAAAFGNCTDENIPLKMH). Asn10 and Asn23 each carry an N-linked (GlcNAc...) asparagine glycan. The helical transmembrane segment at 35 to 55 (YLPVIYGIIFLVGFPGNAVVI) threads the bilayer. Residues 56-69 (STYIFKMRPWKSST) lie on the Cytoplasmic side of the membrane. A helical transmembrane segment spans residues 70–90 (IIMLNLACTDLLYLTSLPFLI). The Extracellular portion of the chain corresponds to 91–116 (HYYASGENWIFGDFMCKFIRFSFHFN). A disulfide bridge connects residues Cys106 and Cys183. A helical membrane pass occupies residues 117 to 137 (LYSSILFLTCFSIFRYCVIIH). At 138 to 151 (PMSCFSIHKTRCAV) the chain is on the cytoplasmic side. The helical transmembrane segment at 152 to 172 (VACAVVWIISLVAVIPMTFLI) threads the bilayer. Over 173–201 (TSTNRTNRSACLDLTSSDELNTIKWYNLI) the chain is Extracellular. N-linked (GlcNAc...) asparagine glycans are attached at residues Asn176 and Asn179. The chain crosses the membrane as a helical span at residues 202–222 (LTATTFCLPLVIVTLCYTTII). The Cytoplasmic segment spans residues 223–242 (HTLTHGLQTDSCLKQKARRL). Residues 243–263 (TILLLLAFYVCFLPFHILRVI) form a helical membrane-spanning segment. At 264–284 (RIESRLLSISCSIENQIHEAY) the chain is on the extracellular side. Residues 285–305 (IVSRPLAALNTFGNLLLYVVV) traverse the membrane as a helical segment. At 306-337 (SDNFQQAVCSTVRCKVSGNLEQAKKISYSNNP) the chain is on the cytoplasmic side.

The protein belongs to the G-protein coupled receptor 1 family. Detected in kidney and, to a lower extent, in placenta. Not detected in brain tissues including the frontal cortex, caudate putamen, thalamus, hypothalamus, hippocampus or pons.

Its subcellular location is the cell membrane. G protein-coupled receptor for dicarboxylates and amino dicarboxylates. Receptor for itaconate, a metabolite produced by myeloid lineages. In the respiratory epithelium, couples the binding of itaconate to the activation of GNA11 and downstream intracellular Ca(2+) release, leading to mucocilliary clearance of airborne pathogens. Receptor for leukotriene E4 (LTE4) produced by mast cells upon allergic inflammation. Binds with high affinity to LTE4 and elicits mucin release from pulmonary epithelium in response to airborne fungi allergens. Regulates mucin-producing goblet cell homeostasis. Receptor for alpha-ketoglutarate produced by proximal tubule renal cells upon metabolic alkalosis. In an intrarenal paracrine signaling pathway, binds alpha-ketoglutarate and drives transepithelial salt reabsorption and bicarbonate secretion by SLC26A4/pendrin-positive intercalated cells. The chain is 2-oxoglutarate receptor 1 (OXGR1) from Homo sapiens (Human).